The following is a 220-amino-acid chain: CRISPR system Cms endoribonuclease Csm3 (220 aa).

Belongs to the CRISPR-associated Csm3 family. Part of the Csm effector complex that includes at least Cas10(1), Csm2(3), Csm3(5), Csm4(1), Csm5(1) and mature crRNA. The Csm complex is elongated and slightly twisted with a maximal length of 215 Angstroms and a diameter of 75-80 Angstroms. It has been modeled to have a central protein filamant of Csm3 subunits along which the dsRNA helix of paired crRNA and target RNA binds. The filament is capped at one end by Cas10 and Csm4 and at the other end by Csm5; ssDNA is thought to bind to the N-terminal HD domain of Cas10. Csm with a precursor crRNA does not include Csm5, while Cas6, the enzyme probably involved in pre-crRNA processing, is found associated with a subset of the Csm complex. A metal cation serves as cofactor.

With respect to regulation, target ssRNase is inhibited by EDTA. Functionally, CRISPR (clustered regularly interspaced short palindromic repeat) is an adaptive immune system that provides protection against mobile genetic elements (viruses, transposable elements and conjugative plasmids). CRISPR clusters contain spacers, sequences complementary to antecedent mobile elements, and target invading nucleic acids. CRISPR clusters are transcribed and processed into CRISPR RNA (crRNA). The type III-A Csm effector complex binds crRNA and acts as a crRNA-guided RNase, DNase and cyclic oligoadenylate synthase; binding of target RNA cognate to the crRNA is required for all activities. In a heterologous host this Csm effector complex restricts ssRNA phage MS2, suggesting it may target RNA viruses in vivo. In terms of biological role, csm functions as a non-specific ssDNase. Base-pairing between crRNA and target RNA to form a ternary Csm complex activates a ssDNase activity; target RNA cleavage suppresses the ssDNase, a temporal control that prevents uncontrolled DNA degradation. Viral RNA transcripts probably tether the Csm complex to the viral genome, recruiting Cas10 ssDNA activity which is able to degrade DNA in the transcription bubble, spatially controlling the DNase activity. This subunit has the target ssRNA endonuclease activity; it cleaves multiple sites in the target RNA at 6 nucleotide intervals. The number of cleavage sites in the target RNA correlates with the number of Csm3 subunits in the Csm effector complex. In the Csm complex target RNA and ssDNA are cleaved simultaneously, although RNase activity (of Csm3) is much faster. RNA cleavage by Csm3 is not required for ssDNase activity as Csm complex with inactive Csm3 still has ssDNase activity; however as the cleaved target RNA products dissociate away ssDNase activity decreases. The sequence is that of CRISPR system Cms endoribonuclease Csm3 from Streptococcus thermophilus.